The following is a 543-amino-acid chain: Excitatory amino acid transporter 1 (543 aa).

Residues M1 to R47 are Cytoplasmic-facing. The chain crosses the membrane as a helical span at residues N48–L68. Over R69–E86 the chain is Extracellular. Residues L87–M108 traverse the membrane as a helical segment. Over A109–R122 the chain is Cytoplasmic. A helical membrane pass occupies residues A123–I145. The Extracellular segment spans residues H146–G236. N-linked (GlcNAc...) asparagine glycans are attached at residues N206 and N216. The helical transmembrane segment at S237–M260 threads the bilayer. Over K261–E269 the chain is Cytoplasmic. The chain crosses the membrane as a helical span at residues F270 to I297. Residues A298–T318 lie on the Extracellular side of the membrane. Residues V319–V340 form a helical membrane-spanning segment. Over T341–P345 the chain is Cytoplasmic. An intramembrane region (discontinuously helical) is located at residues W346–L376. S363–S365 is an L-aspartate binding site. Over E377–R385 the chain is Cytoplasmic. Residues I386 to F412 traverse the membrane as a helical segment. 3 residues coordinate Na(+): G394, T396, and N398. T402 is an L-aspartate binding site. The Extracellular segment spans residues I413–Q425. Residues I426–G459 constitute an intramembrane region (discontinuously helical). I443–G447 provides a ligand contact to L-aspartate. At L460–D472 the chain is on the extracellular side. The helical transmembrane segment at W473–V494 threads the bilayer. Residues D476 and N483 each coordinate L-aspartate. Na(+)-binding residues include N483 and D487. At E495 to M543 the chain is on the cytoplasmic side. A Phosphoserine modification is found at S512. The tract at residues P522–M543 is disordered. Over residues E531–M543 the composition is skewed to basic and acidic residues.

The protein belongs to the dicarboxylate/amino acid:cation symporter (DAACS) (TC 2.A.23) family. SLC1A3 subfamily. As to quaternary structure, homotrimer. Glycosylated. As to expression, detected in brain, in Bergmann glia arborising into the molecular layer of the cerebellum (at protein level). Localized in brain and is highly enriched in the Purkinje cell layer in cerebellum. Intermediate level in lung, low level in spleen, skeletal muscle and testis.

Its subcellular location is the cell membrane. It catalyses the reaction K(+)(in) + L-glutamate(out) + 3 Na(+)(out) + H(+)(out) = K(+)(out) + L-glutamate(in) + 3 Na(+)(in) + H(+)(in). It carries out the reaction K(+)(in) + L-aspartate(out) + 3 Na(+)(out) + H(+)(out) = K(+)(out) + L-aspartate(in) + 3 Na(+)(in) + H(+)(in). The catalysed reaction is D-aspartate(out) + K(+)(in) + 3 Na(+)(out) + H(+)(out) = D-aspartate(in) + K(+)(out) + 3 Na(+)(in) + H(+)(in). Its function is as follows. Sodium-dependent, high-affinity amino acid transporter that mediates the uptake of L-glutamate and also L-aspartate and D-aspartate. Functions as a symporter that transports one amino acid molecule together with two or three Na(+) ions and one proton, in parallel with the counter-transport of one K(+) ion. Plays a redundant role in the rapid removal of released glutamate from the synaptic cleft, which is essential for terminating the postsynaptic action of glutamate. This chain is Excitatory amino acid transporter 1 (Slc1a3), found in Mus musculus (Mouse).